The primary structure comprises 190 residues: ATP-dependent Clp protease proteolytic subunit 2 (190 aa).

Serine 98 serves as the catalytic Nucleophile. Histidine 123 is a catalytic residue.

Belongs to the peptidase S14 family. In terms of assembly, fourteen ClpP subunits assemble into 2 heptameric rings which stack back to back to give a disk-like structure with a central cavity, resembling the structure of eukaryotic proteasomes.

Its subcellular location is the cytoplasm. The enzyme catalyses Hydrolysis of proteins to small peptides in the presence of ATP and magnesium. alpha-casein is the usual test substrate. In the absence of ATP, only oligopeptides shorter than five residues are hydrolyzed (such as succinyl-Leu-Tyr-|-NHMec, and Leu-Tyr-Leu-|-Tyr-Trp, in which cleavage of the -Tyr-|-Leu- and -Tyr-|-Trp bonds also occurs).. Its function is as follows. Cleaves peptides in various proteins in a process that requires ATP hydrolysis. Has a chymotrypsin-like activity. Plays a major role in the degradation of misfolded proteins. The chain is ATP-dependent Clp protease proteolytic subunit 2 from Bacillus licheniformis (strain ATCC 14580 / DSM 13 / JCM 2505 / CCUG 7422 / NBRC 12200 / NCIMB 9375 / NCTC 10341 / NRRL NRS-1264 / Gibson 46).